Consider the following 713-residue polypeptide: Ribosomal RNA large subunit methyltransferase K/L (713 aa).

Residues 46–157 enclose the THUMP domain; the sequence is TAYRICLWSR…RDQATLSLDL (112 aa).

Belongs to the methyltransferase superfamily. RlmKL family.

The protein localises to the cytoplasm. The enzyme catalyses guanosine(2445) in 23S rRNA + S-adenosyl-L-methionine = N(2)-methylguanosine(2445) in 23S rRNA + S-adenosyl-L-homocysteine + H(+). It carries out the reaction guanosine(2069) in 23S rRNA + S-adenosyl-L-methionine = N(2)-methylguanosine(2069) in 23S rRNA + S-adenosyl-L-homocysteine + H(+). Its function is as follows. Specifically methylates the guanine in position 2445 (m2G2445) and the guanine in position 2069 (m7G2069) of 23S rRNA. The chain is Ribosomal RNA large subunit methyltransferase K/L from Syntrophotalea carbinolica (strain DSM 2380 / NBRC 103641 / GraBd1) (Pelobacter carbinolicus).